A 264-amino-acid chain; its full sequence is SPRY domain-containing SOCS box protein 2 (264 aa).

The segment covering methionine 1–alanine 18 has biased composition (polar residues). The tract at residues methionine 1–cysteine 53 is disordered. Low complexity predominate over residues serine 21–serine 34. The 196-residue stretch at proline 26 to arginine 221 folds into the B30.2/SPRY domain. In terms of domain architecture, SOCS box spans alanine 222–lysine 264.

Belongs to the SPSB family. As to quaternary structure, component of the probable ECS(SPSB2) E3 ubiquitin-protein ligase complex which contains CUL5, RNF7/RBX2, Elongin BC complex and SPSB2. Interacts with CUL5, RNF7, ELOB and ELOC. Interacts with MET. Interacts (via B30.2/SPRY domain) with PAWR; this interaction occurs in association with the Elongin BC complex. Interacts with NOS2.

Its subcellular location is the cytoplasm. It is found in the cytosol. The protein operates within protein modification; protein ubiquitination. Its function is as follows. Substrate recognition component of a SCF-like ECS (Elongin BC-CUL2/5-SOCS-box protein) E3 ubiquitin-protein ligase complex which mediates the ubiquitination and subsequent proteasomal degradation of target proteins. Negatively regulates nitric oxide (NO) production and limits cellular toxicity in activated macrophages by mediating the ubiquitination and proteasomal degradation of NOS2. Acts as a bridge which links NOS2 with the ECS E3 ubiquitin ligase complex components ELOC and CUL5. The polypeptide is SPRY domain-containing SOCS box protein 2 (Spsb2) (Rattus norvegicus (Rat)).